The following is a 671-amino-acid chain: cGMP-dependent protein kinase 1 (671 aa).

Serine 2 carries the post-translational modification N-acetylserine. Residues 2-59 (SELEEDFAKILMLKEERIKELEKRLSEKEEEIQELKRKLHKCQSVLPVPSTHIGPRTT) adopt a coiled-coil conformation. The interval 2–102 (SELEEDFAKI…LIKEAILDND (101 aa)) is required for dimerization. The interval 9–44 (AKILMLKEERIKELEKRLSEKEEEIQELKRKLHKCQ) is leucine-zipper. The autoinhibitory domain stretch occupies residues 50 to 75 (PSTHIGPRTTRAQGISAEPQTYRSFH). At threonine 59 the chain carries Phosphothreonine; by autocatalysis. The tract at residues 103 to 220 (FMKNLELSQI…EYMEFLKSVP (118 aa)) is cGMP-binding, high affinity. 3',5'-cyclic GMP is bound by residues 167–170 (GELA), 177–178 (RT), arginine 282, 291–294 (GEKA), 301–302 (RT), and tyrosine 336. The interval 221 to 341 (TFQSLPDEIL…SNKAYEDAEA (121 aa)) is cGMP-binding, low affinity. The Protein kinase domain occupies 360-619 (FNIIDTLGVG…VKDIQKHKWF (260 aa)). ATP contacts are provided by residues 366 to 374 (LGVGGFGRV) and lysine 390. The active-site Proton acceptor is the aspartate 484. Phosphothreonine is present on threonine 515. The 52-residue stretch at 620 to 671 (EGFNWEGLRKGTLTPPIIPSVASPTDTSNFDSFPEDSDEPPPDDNSGWDIDF) folds into the AGC-kinase C-terminal domain. The interval 635-671 (PIIPSVASPTDTSNFDSFPEDSDEPPPDDNSGWDIDF) is disordered. Residues 652–661 (FPEDSDEPPP) show a composition bias toward acidic residues.

This sequence belongs to the protein kinase superfamily. AGC Ser/Thr protein kinase family. cGMP subfamily. As to quaternary structure, isoform alpha: parallel homodimer or heterodimer and also heterotetramer. Interacts directly with PPP1R12A. Non-covalent dimer of dimer of PRKG1-PRKG1 and PPP1R12A-PPP1R12A. This interaction targets PRKG1 to stress fibers to mediate smooth muscle cell relaxation and vasodilation in responses to rises in cGMP. Isoform beta: antiparallel homodimer. Part of cGMP kinase signaling complex at least composed of ACTA2/alpha-actin, CNN1/calponin H1, PLN/phospholamban, PRKG1 and ITPR1. Interacts with IRAG1. Forms a stable complex with ITPR1, IRAG1, and isoform beta of PRKG1. Interacts with TRPC7 (via ankyrin repeat domain). Isoform alpha interacts with RGS2. Interacts with GTF2I. Post-translationally, autophosphorylation increases kinase activity. In terms of processing, 65 kDa monomer is produced by proteolytic cleavage. Detected in cerebellum, hippocampus, dorsomedial hypothalamus, medulla, subcommissural organ, cerebral cortex, amygdala, habenulae, various hypothalamic regions, olfactory bulb, pituitary gland, and retina. Isoform alpha is prominent in the cerebellum and medulla, whereas isoform Beta is predominant in the cortex, hippocampus, hypothalamus, and olfactory bulb.

The protein resides in the cytoplasm. The catalysed reaction is L-seryl-[protein] + ATP = O-phospho-L-seryl-[protein] + ADP + H(+). The enzyme catalyses L-threonyl-[protein] + ATP = O-phospho-L-threonyl-[protein] + ADP + H(+). Its activity is regulated as follows. In the absence of cGMP, PRKG1 activity is suppressed by autoinhibitory contacts. Functionally, serine/threonine protein kinase that acts as a key mediator of the nitric oxide (NO)/cGMP signaling pathway. GMP binding activates PRKG1, which phosphorylates serines and threonines on many cellular proteins. Numerous protein targets for PRKG1 phosphorylation are implicated in modulating cellular calcium, but the contribution of each of these targets may vary substantially among cell types. Proteins that are phosphorylated by PRKG1 regulate platelet activation and adhesion, smooth muscle contraction, cardiac function, gene expression, feedback of the NO-signaling pathway, and other processes involved in several aspects of the CNS like axon guidance, hippocampal and cerebellar learning, circadian rhythm and nociception. Smooth muscle relaxation is mediated through lowering of intracellular free calcium, by desensitization of contractile proteins to calcium, and by decrease in the contractile state of smooth muscle or in platelet activation. Regulates intracellular calcium levels via several pathways: phosphorylates IRAG1 and inhibits IP3-induced Ca(2+) release from intracellular stores, phosphorylation of KCNMA1 (BKCa) channels decreases intracellular Ca(2+) levels, which leads to increased opening of this channel. PRKG1 phosphorylates the canonical transient receptor potential channel (TRPC) family which inactivates the associated inward calcium current. Another mode of action of NO/cGMP/PKGI signaling involves PKGI-mediated inactivation of the Ras homolog gene family member A (RhoA). Phosphorylation of RHOA by PRKG1 blocks the action of this protein in myriad processes: regulation of RHOA translocation; decreasing contraction; controlling vesicle trafficking, reduction of myosin light chain phosphorylation resulting in vasorelaxation. Activation of PRKG1 by NO signaling also alters gene expression in a number of tissues. In smooth muscle cells, increased cGMP and PRKG1 activity influence expression of smooth muscle-specific contractile proteins, levels of proteins in the NO/cGMP signaling pathway, down-regulation of the matrix proteins osteopontin and thrombospondin-1 to limit smooth muscle cell migration and phenotype. Regulates vasodilator-stimulated phosphoprotein (VASP) functions in platelets and smooth muscle. This chain is cGMP-dependent protein kinase 1 (Prkg1), found in Mus musculus (Mouse).